We begin with the raw amino-acid sequence, 482 residues long: Mannan endo-1,4-beta-mannosidase (482 aa).

Positions 1 to 21 (MARTLRYLLCGILALAAGSNA) are cleaved as a signal peptide. Residues 42–160 (TTYEAEDAIL…WYLVDSITLT (119 aa)) enclose the CBM6 domain. 2 N-linked (GlcNAc...) asparagine glycosylation sites follow: Asn171 and Asn300. Residues 181–474 (ASARALYDYL…YTSDYVLTLD (294 aa)) enclose the GH26 domain. Catalysis depends on Glu332, which acts as the Proton donor. The active-site Nucleophile is Glu422.

Belongs to the glycosyl hydrolase 26 family.

The protein resides in the secreted. The activity is completely impaired by Ag(+), partially inhibited by Zn(2+), and enhanced by Co(2+), Ni(2+) and Cu(2+) by 22.6, 14.5 and 20.8 %, respectively. Ca(2+), Na(+), Mg(2+), Mn(2+), urea and EDTA do not significantly affect the mannanase activity. Functionally, mannan endo-1,4-beta-mannosidase that exhibits high activity against konjac glucomannan and carob galactomannan, as well as a lower activity toward beta-mannan. Shows no activity against barley beta-glucan, birchwood xylan, and low viscosity carboxymethyl cellulose (CMC). Has the ability to hydrolyze manno-oligosaccharides such as M4 which is degraded slightly to M3 and M1, M5 which is mainly degraded to M4 and M1, and M6 which is mostly hydrolyzed to M4 and M2. Shows no activity toward M2 and M3 manno-oligosaccharides. This is Mannan endo-1,4-beta-mannosidase from Thermothelomyces thermophilus (strain ATCC 42464 / BCRC 31852 / DSM 1799) (Sporotrichum thermophile).